A 314-amino-acid polypeptide reads, in one-letter code: 3'-5' exoribonuclease YhaM (314 aa).

Positions His-163–Lys-279 constitute an HD domain.

Belongs to the YhaM family.

Shows a 3'-5' exoribonuclease activity. This Bacillus anthracis (strain CDC 684 / NRRL 3495) protein is 3'-5' exoribonuclease YhaM.